Consider the following 109-residue polypeptide: Nucleoid-associated protein Bcer98_0019 (109 aa).

This sequence belongs to the YbaB/EbfC family. In terms of assembly, homodimer.

Its subcellular location is the cytoplasm. It is found in the nucleoid. In terms of biological role, binds to DNA and alters its conformation. May be involved in regulation of gene expression, nucleoid organization and DNA protection. The polypeptide is Nucleoid-associated protein Bcer98_0019 (Bacillus cytotoxicus (strain DSM 22905 / CIP 110041 / 391-98 / NVH 391-98)).